The following is a 517-amino-acid chain: Forkhead box protein N4 (517 aa).

The segment at residues 193–289 is a DNA-binding region (fork-head); it reads KPIYSYSCLI…EEMHKWKRKD (97 aa). 2 disordered regions span residues 365-398 and 497-517; these read VQPQ…LPHP and SGTS…IALL.

The protein localises to the nucleus. In terms of biological role, transcription factor essential for neural and some non-neural tissues development, such as retina and lung respectively. Binds to an 11-bp consensus sequence containing the invariant tetranucleotide 5'-ACGC-3'. During development of the central nervous system, is required to specify the amacrine and horizontal cell fates from multipotent retinal progenitors while suppressing the alternative photoreceptor cell fates through activating DLL4-NOTCH signaling. Also acts synergistically with ASCL1/MASH1 to activate DLL4-NOTCH signaling and drive commitment of p2 progenitors to the V2b interneuron fates during spinal cord neurogenesis. In development of non-neural tissues, plays an essential role in the specification of the atrioventricular canal and is indirectly required for patterning the distal airway during lung development. This Homo sapiens (Human) protein is Forkhead box protein N4 (FOXN4).